Here is a 120-residue protein sequence, read N- to C-terminus: Large ribosomal subunit protein eL18 (120 aa).

It belongs to the eukaryotic ribosomal protein eL18 family.

This chain is Large ribosomal subunit protein eL18, found in Thermococcus onnurineus (strain NA1).